Here is a 160-residue protein sequence, read N- to C-terminus: Major pollen allergen Bet v 1-B (160 aa).

Residues K55, Y82, Y84, and N101 each coordinate brassinolide.

Belongs to the BetVI family.

Its subcellular location is the cytoplasm. In terms of biological role, may be a general steroid carrier protein. This chain is Major pollen allergen Bet v 1-B (BETV1B), found in Betula pendula (European white birch).